The following is a 169-amino-acid chain: NAD(P)H-quinone oxidoreductase subunit J, chloroplastic (169 aa).

Belongs to the complex I 30 kDa subunit family. In terms of assembly, NDH is composed of at least 16 different subunits, 5 of which are encoded in the nucleus.

The protein localises to the plastid. Its subcellular location is the chloroplast thylakoid membrane. The catalysed reaction is a plastoquinone + NADH + (n+1) H(+)(in) = a plastoquinol + NAD(+) + n H(+)(out). The enzyme catalyses a plastoquinone + NADPH + (n+1) H(+)(in) = a plastoquinol + NADP(+) + n H(+)(out). Functionally, NDH shuttles electrons from NAD(P)H:plastoquinone, via FMN and iron-sulfur (Fe-S) centers, to quinones in the photosynthetic chain and possibly in a chloroplast respiratory chain. The immediate electron acceptor for the enzyme in this species is believed to be plastoquinone. Couples the redox reaction to proton translocation, and thus conserves the redox energy in a proton gradient. This Marchantia polymorpha (Common liverwort) protein is NAD(P)H-quinone oxidoreductase subunit J, chloroplastic.